A 463-amino-acid polypeptide reads, in one-letter code: Phosphoglucosamine mutase (463 aa).

Residue Ser-110 is the Phosphoserine intermediate of the active site. 4 residues coordinate Mg(2+): Ser-110, Asp-255, Asp-257, and Asp-259. A Phosphoserine modification is found at Ser-110.

This sequence belongs to the phosphohexose mutase family. Mg(2+) serves as cofactor. Activated by phosphorylation.

It catalyses the reaction alpha-D-glucosamine 1-phosphate = D-glucosamine 6-phosphate. Functionally, catalyzes the conversion of glucosamine-6-phosphate to glucosamine-1-phosphate. In Koribacter versatilis (strain Ellin345), this protein is Phosphoglucosamine mutase.